We begin with the raw amino-acid sequence, 395 residues long: Innexin inx3 (395 aa).

Residues 1-37 (MAVFGMVSAVSGFIKIRYLLDKAVIDNMVFRCHYRIT) lie on the Cytoplasmic side of the membrane. The helical transmembrane segment at 38–58 (TAILFTCCIIVTANNLIGDPI) threads the bilayer. Topologically, residues 59–114 (SCINDGAIPMHVINTFCWITYTYTIPGQQHRQIGTDVAGPGLGNEYGQEKRYHSYY) are extracellular. A helical membrane pass occupies residues 115-135 (QWVPFVLFFQGLMFYVPHWVW). The Cytoplasmic segment spans residues 136 to 183 (KNMEDGKIRMITDGLRGMVSVPDDYRRDRQDRILKYFVNSLNTHNGYS). A helical transmembrane segment spans residues 184–204 (FAYFFCELLNFINVIVNIFMV). Residues 205 to 272 (DKFLGGAFMS…VLALNILNEK (68 aa)) are Extracellular-facing. A helical membrane pass occupies residues 273-293 (IYIFLWFWFIILATISGVAVL). The Cytoplasmic portion of the chain corresponds to 294-395 (YSLVVIMMPT…TFGGGKETET (102 aa)). Phosphoserine occurs at positions 366 and 377. At Tyr-381 the chain carries Phosphotyrosine.

The protein belongs to the pannexin family. Heterooligomer of Inx2 (via cytoplasmic C-terminal region) and Inx3 (via cytoplasmic C-terminal region). In ovary, expressed in nurse cells and follicle cells. Expressed in embryonic epithelial cells. Ubiquitously expressed in stage 5 embryos. Expressed in foregut and hindgut from stage 11-17 and in proventriculus, epidermis and CNS in stage 16 embryos (at protein level). Expressed in anterior and ventral regions in stage 8 embryos. Repeating epidermal pattern emerges at stage 11, refines to one or two cells at each side of the segment borders by stage 13. Expressed in the imaginal wing disk. In pupae, expressed in the CNS and in secondary and tertiary pigment cells of the retina.

It localises to the cell membrane. Its subcellular location is the cell junction. The protein resides in the gap junction. The protein localises to the cytoplasm. It is found in the lateral cell membrane. It localises to the apicolateral cell membrane. Structural components of the gap junctions. Essential for proper epithelial development of the epidermis. This chain is Innexin inx3 (Inx3), found in Drosophila melanogaster (Fruit fly).